Here is a 381-residue protein sequence, read N- to C-terminus: V-type proton ATPase subunit C 1-B (381 aa).

T2 bears the N-acetylthreonine mark.

This sequence belongs to the V-ATPase C subunit family. As to quaternary structure, V-ATPase is a heteromultimeric enzyme made up of two complexes: the ATP-hydrolytic V1 complex and the proton translocation V0 complex. The V1 complex consists of three catalytic AB heterodimers that form a heterohexamer, three peripheral stalks each consisting of EG heterodimers, one central rotor including subunits D and F, and the regulatory subunits C and H. The proton translocation complex V0 consists of the proton transport subunit a, a ring of proteolipid subunits c9c'', rotary subunit d, subunits e and f, and two accessory subunits.

Its function is as follows. Subunit of the V1 complex of vacuolar(H+)-ATPase (V-ATPase), a multisubunit enzyme composed of a peripheral complex (V1) that hydrolyzes ATP and a membrane integral complex (V0) that translocates protons. V-ATPase is responsible for acidifying and maintaining the pH of intracellular compartments and in some cell types, is targeted to the plasma membrane, where it is responsible for acidifying the extracellular environment. Subunit C is necessary for the assembly of the catalytic sector of the enzyme and is likely to have a specific function in its catalytic activity. The polypeptide is V-type proton ATPase subunit C 1-B (atp6v1c1b) (Danio rerio (Zebrafish)).